Reading from the N-terminus, the 252-residue chain is Thiazole synthase (252 aa).

Lys-95 serves as the catalytic Schiff-base intermediate with DXP. 1-deoxy-D-xylulose 5-phosphate contacts are provided by residues Gly-156, 182–183 (AG), and 204–205 (NT).

This sequence belongs to the ThiG family. Homotetramer. Forms heterodimers with either ThiH or ThiS.

The protein localises to the cytoplasm. It carries out the reaction [ThiS sulfur-carrier protein]-C-terminal-Gly-aminoethanethioate + 2-iminoacetate + 1-deoxy-D-xylulose 5-phosphate = [ThiS sulfur-carrier protein]-C-terminal Gly-Gly + 2-[(2R,5Z)-2-carboxy-4-methylthiazol-5(2H)-ylidene]ethyl phosphate + 2 H2O + H(+). It functions in the pathway cofactor biosynthesis; thiamine diphosphate biosynthesis. Functionally, catalyzes the rearrangement of 1-deoxy-D-xylulose 5-phosphate (DXP) to produce the thiazole phosphate moiety of thiamine. Sulfur is provided by the thiocarboxylate moiety of the carrier protein ThiS. In vitro, sulfur can be provided by H(2)S. The protein is Thiazole synthase of Shewanella sp. (strain ANA-3).